The primary structure comprises 86 residues: Large ribosomal subunit protein uL23 (86 aa).

It belongs to the universal ribosomal protein uL23 family. Part of the 50S ribosomal subunit. Contacts protein L29.

Functionally, binds to 23S rRNA. One of the proteins that surrounds the polypeptide exit tunnel on the outside of the ribosome. The protein is Large ribosomal subunit protein uL23 of Aeropyrum pernix (strain ATCC 700893 / DSM 11879 / JCM 9820 / NBRC 100138 / K1).